We begin with the raw amino-acid sequence, 70 residues long: Small ribosomal subunit protein bS21 (70 aa).

Belongs to the bacterial ribosomal protein bS21 family.

This Sulfurovum sp. (strain NBC37-1) protein is Small ribosomal subunit protein bS21.